The chain runs to 255 residues: Borealin-2 (255 aa).

Disordered regions lie at residues 1–24 (MAPR…HSFE) and 107–156 (IQKP…STGS). Polar residues predominate over residues 124-135 (AGQQRSSSQSKT).

Belongs to the borealin family. Component of the CPC complex.

The protein localises to the nucleus. Its subcellular location is the chromosome. It localises to the centromere. In terms of biological role, component of the chromosomal passenger complex (CPC), a complex that acts as a key regulator of mitosis. The CPC complex has essential functions at the centromere in ensuring correct chromosome alignment and segregation and is required for chromatin-induced microtubule stabilization and spindle assembly. The sequence is that of Borealin-2 (cdca9) from Danio rerio (Zebrafish).